We begin with the raw amino-acid sequence, 259 residues long: 3-oxo-5-alpha-steroid 4-dehydrogenase 1 (259 aa).

Transmembrane regions (helical) follow at residues 12-29 (LLAALAYLQCAVGCAVFA), 86-106 (ILLAMFLVHYGHRCLIYPFLM), 111-131 (PMPLLACTMAIMFCTCNGYLQ), 151-171 (FLIGFGLWLTGMLINIHSDHI), and 209-229 (YALASWSVQGAAFAFFTFCFL).

It belongs to the steroid 5-alpha reductase family. Liver and prostate (at a low level).

The protein resides in the microsome membrane. The protein localises to the endoplasmic reticulum membrane. It catalyses the reaction a 3-oxo-5alpha-steroid + NADP(+) = a 3-oxo-Delta(4)-steroid + NADPH + H(+). The catalysed reaction is androst-4-ene-3,17-dione + NADPH + H(+) = 5alpha-androstan-3,17-dione + NADP(+). It carries out the reaction 5alpha-pregnane-3,20-dione + NADP(+) = progesterone + NADPH + H(+). The enzyme catalyses 17beta-hydroxy-5alpha-androstan-3-one + NADP(+) = testosterone + NADPH + H(+). Converts testosterone into 5-alpha-dihydrotestosterone and progesterone or corticosterone into their corresponding 5-alpha-3-oxosteroids. It plays a central role in sexual differentiation and androgen physiology. The protein is 3-oxo-5-alpha-steroid 4-dehydrogenase 1 of Homo sapiens (Human).